The sequence spans 280 residues: MGLKDFVDKLKNIKKSRIKIEEGAWIKCDKCKNILYIEDLLKNLKICPHCGYTFRMNAKERVDSLLDKVYSYDLFPKIKPVDIIGFKDTKRYKDRLKEAQEKTGLNDAIIIAHGNIYDREVVLASMDFNFMGGSMGSVVGAKFVRGVEFAIEKSIPFISVAASGGARMQESIVSLMQMAKTAIAIDRLNKAGILYISVLTDPTMGGVSASFAFLGDIIIAEPESLIGFAGPRVIEQTIRQQLPEGFQRAEFLLEKGQIDMVVDRKNLKKTIYTLIRHTHG.

In terms of domain architecture, CoA carboxyltransferase N-terminal spans 24–280 (AWIKCDKCKN…IYTLIRHTHG (257 aa)). Residues C28, C31, C47, and C50 each coordinate Zn(2+). Residues 28–50 (CDKCKNILYIEDLLKNLKICPHC) form a C4-type zinc finger.

This sequence belongs to the AccD/PCCB family. As to quaternary structure, acetyl-CoA carboxylase is a heterohexamer composed of biotin carboxyl carrier protein (AccB), biotin carboxylase (AccC) and two subunits each of ACCase subunit alpha (AccA) and ACCase subunit beta (AccD). The cofactor is Zn(2+).

The protein resides in the cytoplasm. It catalyses the reaction N(6)-carboxybiotinyl-L-lysyl-[protein] + acetyl-CoA = N(6)-biotinyl-L-lysyl-[protein] + malonyl-CoA. The protein operates within lipid metabolism; malonyl-CoA biosynthesis; malonyl-CoA from acetyl-CoA: step 1/1. Functionally, component of the acetyl coenzyme A carboxylase (ACC) complex. Biotin carboxylase (BC) catalyzes the carboxylation of biotin on its carrier protein (BCCP) and then the CO(2) group is transferred by the transcarboxylase to acetyl-CoA to form malonyl-CoA. The protein is Acetyl-coenzyme A carboxylase carboxyl transferase subunit beta of Sulfurihydrogenibium sp. (strain YO3AOP1).